The primary structure comprises 207 residues: dTTP/UTP pyrophosphatase (207 aa).

Asp-68 functions as the Proton acceptor in the catalytic mechanism.

The protein belongs to the Maf family. YhdE subfamily. A divalent metal cation serves as cofactor.

It is found in the cytoplasm. It carries out the reaction dTTP + H2O = dTMP + diphosphate + H(+). It catalyses the reaction UTP + H2O = UMP + diphosphate + H(+). Its function is as follows. Nucleoside triphosphate pyrophosphatase that hydrolyzes dTTP and UTP. May have a dual role in cell division arrest and in preventing the incorporation of modified nucleotides into cellular nucleic acids. The protein is dTTP/UTP pyrophosphatase of Staphylothermus marinus (strain ATCC 43588 / DSM 3639 / JCM 9404 / F1).